A 265-amino-acid polypeptide reads, in one-letter code: Indole-3-glycerol phosphate synthase (265 aa).

The protein belongs to the TrpC family.

The enzyme catalyses 1-(2-carboxyphenylamino)-1-deoxy-D-ribulose 5-phosphate + H(+) = (1S,2R)-1-C-(indol-3-yl)glycerol 3-phosphate + CO2 + H2O. The protein operates within amino-acid biosynthesis; L-tryptophan biosynthesis; L-tryptophan from chorismate: step 4/5. The polypeptide is Indole-3-glycerol phosphate synthase (Xanthomonas campestris pv. campestris (strain 8004)).